The primary structure comprises 66 residues: Large ribosomal subunit protein bL33c (66 aa).

It belongs to the bacterial ribosomal protein bL33 family.

The protein resides in the plastid. It is found in the chloroplast. In Daucus carota (Wild carrot), this protein is Large ribosomal subunit protein bL33c.